Here is a 407-residue protein sequence, read N- to C-terminus: MKKVIILGSTGSIGTQTLEVISSRRDQFEVAGISAGGSDVGSLAQQIIDFSIPVVAVAREDAAEELQRALAVQAGSRGRIVPNPRILTGPDASTELAAMPADVVCNAITGAAGLRPTLATLAAGTTLALANKESLVIGGRLVTQAAASGQIVPVDSEHSAFAQCLRGGGRNEVRRLVLTASGGPFRGRDRASLADVSAAEAMKHPTWNMGRVITINSSTLVNKGLELLEAALLYDVDLDDITVVVHPQSIVHSMVEFWDGATIAQASPPDMRLPIALGLSWPDRLPDAAAGCDWSTATQWTFEPLDNDTFGAVELARRAGHAAGTAPAVFNAANESCVDAFCAGSIGFLDITDTIAAVLDEHLSGDENDTLGARHVGDEALTLDAVLAADAWGRRRAAEVCARGIRR.

Positions 10, 11, 12, 13, 36, and 131 each coordinate NADPH. Lysine 132 serves as a coordination point for 1-deoxy-D-xylulose 5-phosphate. Glutamate 133 contributes to the NADPH binding site. Aspartate 155 contacts Mn(2+). The 1-deoxy-D-xylulose 5-phosphate site is built by serine 156, glutamate 157, serine 181, and histidine 204. Glutamate 157 is a binding site for Mn(2+). Glycine 210 contributes to the NADPH binding site. Residues serine 217, asparagine 222, lysine 223, and glutamate 226 each coordinate 1-deoxy-D-xylulose 5-phosphate. A Mn(2+)-binding site is contributed by glutamate 226.

The protein belongs to the DXR family. The cofactor is Mg(2+). Mn(2+) serves as cofactor.

It catalyses the reaction 2-C-methyl-D-erythritol 4-phosphate + NADP(+) = 1-deoxy-D-xylulose 5-phosphate + NADPH + H(+). Its pathway is isoprenoid biosynthesis; isopentenyl diphosphate biosynthesis via DXP pathway; isopentenyl diphosphate from 1-deoxy-D-xylulose 5-phosphate: step 1/6. Functionally, catalyzes the NADPH-dependent rearrangement and reduction of 1-deoxy-D-xylulose-5-phosphate (DXP) to 2-C-methyl-D-erythritol 4-phosphate (MEP). The protein is 1-deoxy-D-xylulose 5-phosphate reductoisomerase of Cutibacterium acnes (strain DSM 16379 / KPA171202) (Propionibacterium acnes).